The following is a 561-amino-acid chain: Arginine--tRNA ligase (561 aa).

A 'HIGH' region motif is present at residues 129–139 (ANPTGPLHVGH).

This sequence belongs to the class-I aminoacyl-tRNA synthetase family. As to quaternary structure, monomer.

Its subcellular location is the cytoplasm. It catalyses the reaction tRNA(Arg) + L-arginine + ATP = L-arginyl-tRNA(Arg) + AMP + diphosphate. This chain is Arginine--tRNA ligase, found in Polaromonas sp. (strain JS666 / ATCC BAA-500).